Reading from the N-terminus, the 118-residue chain is Ribonuclease P protein component (118 aa).

This sequence belongs to the RnpA family. In terms of assembly, consists of a catalytic RNA component (M1 or rnpB) and a protein subunit.

It catalyses the reaction Endonucleolytic cleavage of RNA, removing 5'-extranucleotides from tRNA precursor.. In terms of biological role, RNaseP catalyzes the removal of the 5'-leader sequence from pre-tRNA to produce the mature 5'-terminus. It can also cleave other RNA substrates such as 4.5S RNA. The protein component plays an auxiliary but essential role in vivo by binding to the 5'-leader sequence and broadening the substrate specificity of the ribozyme. The protein is Ribonuclease P protein component of Shewanella sp. (strain ANA-3).